The following is a 631-amino-acid chain: Protelomerase (631 aa).

Positions 275, 300, 383, and 416 each coordinate DNA. The active-site Nucleophile is Tyr425. The disordered stretch occupies residues 533-592 (LPDEESVETIDEPDDESQDDELDEDEIELDEGGGDEPTEEEGPEEHQPTALKPVFKPAKN). Positions 534 to 575 (PDEESVETIDEPDDESQDDELDEDEIELDEGGGDEPTEEEGP) are enriched in acidic residues.

It belongs to the Caudoviricetes Protelomerase family. Monomer. Homodimer; in presence of DNA.

In terms of biological role, converts the circular intermediates produced by the viral replication and carrying a joined telomere site to a linear DNA molecule with covalently closed hairpin ends. The viral circular DNA is cleaved at a palindromic site called telRL thereby generating a linear prophage plasmid with telomeres. Binds covalently to the 3'-phosphoryl of the cleaved strands. In Escherichia coli (Bacteriophage N15), this protein is Protelomerase.